The chain runs to 142 residues: Large ribosomal subunit protein bL17 (142 aa).

It belongs to the bacterial ribosomal protein bL17 family. In terms of assembly, part of the 50S ribosomal subunit. Contacts protein L32.

This is Large ribosomal subunit protein bL17 from Protochlamydia amoebophila (strain UWE25).